The sequence spans 286 residues: Lipoyl synthase (286 aa).

7 residues coordinate [4Fe-4S] cluster: Cys-34, Cys-39, Cys-45, Cys-60, Cys-64, Cys-67, and Ser-271. A Radical SAM core domain is found at Trp-46–Ser-260.

This sequence belongs to the radical SAM superfamily. Lipoyl synthase family. [4Fe-4S] cluster serves as cofactor.

The protein resides in the cytoplasm. It catalyses the reaction [[Fe-S] cluster scaffold protein carrying a second [4Fe-4S](2+) cluster] + N(6)-octanoyl-L-lysyl-[protein] + 2 oxidized [2Fe-2S]-[ferredoxin] + 2 S-adenosyl-L-methionine + 4 H(+) = [[Fe-S] cluster scaffold protein] + N(6)-[(R)-dihydrolipoyl]-L-lysyl-[protein] + 4 Fe(3+) + 2 hydrogen sulfide + 2 5'-deoxyadenosine + 2 L-methionine + 2 reduced [2Fe-2S]-[ferredoxin]. Its pathway is protein modification; protein lipoylation via endogenous pathway; protein N(6)-(lipoyl)lysine from octanoyl-[acyl-carrier-protein]: step 2/2. Catalyzes the radical-mediated insertion of two sulfur atoms into the C-6 and C-8 positions of the octanoyl moiety bound to the lipoyl domains of lipoate-dependent enzymes, thereby converting the octanoylated domains into lipoylated derivatives. The protein is Lipoyl synthase of Picrophilus torridus (strain ATCC 700027 / DSM 9790 / JCM 10055 / NBRC 100828 / KAW 2/3).